The following is a 342-amino-acid chain: Succinylglutamate desuccinylase (342 aa).

Residues His-63, Glu-66, and His-155 each coordinate Zn(2+). Glu-219 is a catalytic residue.

It belongs to the AspA/AstE family. Succinylglutamate desuccinylase subfamily. Zn(2+) serves as cofactor.

The enzyme catalyses N-succinyl-L-glutamate + H2O = L-glutamate + succinate. Its pathway is amino-acid degradation; L-arginine degradation via AST pathway; L-glutamate and succinate from L-arginine: step 5/5. Its function is as follows. Transforms N(2)-succinylglutamate into succinate and glutamate. This chain is Succinylglutamate desuccinylase, found in Vibrio campbellii (strain ATCC BAA-1116).